A 983-amino-acid polypeptide reads, in one-letter code: Nitrate reductase [NADPH] (983 aa).

2 stretches are compositionally biased toward low complexity: residues 1–14 (MTIS…SSKT) and 26–48 (SSSS…SSPT). A disordered region spans residues 1-50 (MTISTTSSSTSSKTSSEKGDDLKGFSSSSSPASSRSSSATTPEPSSPTVL). Residue Cys-184 participates in Mo-molybdopterin binding. In terms of domain architecture, Cytochrome b5 heme-binding spans 585–662 (DTIITAADLA…LRDFHLGRLE (78 aa)). Heme contacts are provided by His-622 and His-645. Residues 688–815 (KKWRATRLVS…KGPLGSFTYL (128 aa)) enclose the FAD-binding FR-type domain. FAD-binding positions include 746–749 (RAYT), 763–767 (LIKVY), Phe-768, Phe-780, 784–786 (KMT), Ser-841, and Thr-844. An NADP(+)-binding site is contributed by 952–961 (LALVCGPPPM).

This sequence belongs to the nitrate reductase family. In terms of assembly, homodimer. FAD is required as a cofactor. It depends on heme as a cofactor. Requires Mo-molybdopterin as cofactor.

The enzyme catalyses nitrite + NADP(+) + H2O = nitrate + NADPH + H(+). The protein operates within nitrogen metabolism; nitrate reduction (assimilation). Functionally, nitrate reductase is a key enzyme involved in the first step of nitrate assimilation in plants, fungi and bacteria. The polypeptide is Nitrate reductase [NADPH] (NAR1) (Mycosarcoma maydis (Corn smut fungus)).